The primary structure comprises 509 residues: Maturase K (509 aa).

It belongs to the intron maturase 2 family. MatK subfamily.

It is found in the plastid. Its subcellular location is the chloroplast. Functionally, usually encoded in the trnK tRNA gene intron. Probably assists in splicing its own and other chloroplast group II introns. The sequence is that of Maturase K from Solanum lycopersicum (Tomato).